The primary structure comprises 309 residues: Protoheme IX farnesyltransferase 2 (309 aa).

8 consecutive transmembrane segments (helical) span residues 35–55, 59–79, 107–127, 131–151, 159–179, 186–206, 238–258, and 289–309; these read FKVV…APDV, MGVQ…AAVI, AHAL…LMLW, LTAI…TSFL, IVIG…SETG, WLLV…LAIA, LLAI…IYLI, and FSII…WLLL.

This sequence belongs to the UbiA prenyltransferase family. Protoheme IX farnesyltransferase subfamily.

The protein localises to the cell inner membrane. The catalysed reaction is heme b + (2E,6E)-farnesyl diphosphate + H2O = Fe(II)-heme o + diphosphate. It participates in porphyrin-containing compound metabolism; heme O biosynthesis; heme O from protoheme: step 1/1. Its function is as follows. Converts heme B (protoheme IX) to heme O by substitution of the vinyl group on carbon 2 of heme B porphyrin ring with a hydroxyethyl farnesyl side group. The chain is Protoheme IX farnesyltransferase 2 from Pseudoalteromonas translucida (strain TAC 125).